Here is a 779-residue protein sequence, read N- to C-terminus: Mesenchyme-specific cell surface glycoprotein (779 aa).

A signal peptide spans 1–15 (MQFGVPLLVLCLALG). 2 N-linked (GlcNAc...) asparagine glycosylation sites follow: Asn-203 and Asn-234. Positions 249-363 (AGFPRGTTWS…QYPMIPTTPL (115 aa)) are disordered. The segment covering 262–351 (GAGGQGGQGQ…GGQGGQGGGN (90 aa)) has biased composition (gly residues). 3 N-linked (GlcNAc...) asparagine glycosylation sites follow: Asn-369, Asn-451, and Asn-609.

As to expression, restricted to the primary mesenchyme cell lineage.

The protein localises to the cell membrane. In terms of biological role, not known. Could be involved in mesenchyme cell migration, adhesion, fusion, or spicule formation. This Strongylocentrotus purpuratus (Purple sea urchin) protein is Mesenchyme-specific cell surface glycoprotein.